Consider the following 616-residue polypeptide: ATP-dependent RNA helicase VAD1 (616 aa).

The disordered stretch occupies residues 1 to 35 (MASSSTLANDDWKQGLAAPPKDLRPQTEDVTATQG). Residues 36–64 (SRFEDFGLRRELLMGIYTAGFERPSPIQE) carry the Q motif motif. The Helicase ATP-binding domain maps to 67-238 (IPMALTGRDI…DQHMVQPYEI (172 aa)). Residue 80–87 (AKNGTGKT) coordinates ATP. The DEAD box motif lies at 186 to 189 (DEAD). Residues 248 to 408 (GVTQYYAYVE…PIPAVIDPVL (161 aa)) form the Helicase C-terminal domain. Positions 416-616 (EEERESPPPK…GASQSQQAQA (201 aa)) are disordered. 3 stretches are compositionally biased toward low complexity: residues 427 to 441 (AAIAAPPAQQQPQQR), 458 to 500 (PAAA…NSSP), and 508 to 523 (YPQQAPTQAQGPAQMQ). Residues 529–545 (PATQPQASAQIPVQGQT) show a composition bias toward polar residues. Low complexity-rich tracts occupy residues 550 to 579 (PRAQQQGQQQPSQPGQAEGQSQPNRRPNTG) and 606 to 616 (AGASQSQQAQA).

It belongs to the DEAD box helicase family. DDX6/DHH1 subfamily.

The protein localises to the cytoplasm. Its subcellular location is the P-body. It catalyses the reaction ATP + H2O = ADP + phosphate + H(+). Functionally, ATP-dependent RNA helicase involved in mRNA turnover, and more specifically in mRNA decapping. Is involved in G1/S DNA-damage checkpoint recovery, probably through the regulation of the translational status of a subset of mRNAs. May also have a role in translation and mRNA nuclear export. Blocks autophagy in nutrient-rich conditions by, at least partly, binding and repressing the expression of a set of ATG genes, including ATG3, ATG7, ATG8, ATG19, ATG20 and ATG22. VAD1-mediated repression of autophagy is regulated by TOR-dependent phosphorylation of the decapping enzyme DCP2. Regulates multiple virulence-associated genes. Repression of autophagy by VAD1 also regulates the pathogenesis. This chain is ATP-dependent RNA helicase VAD1, found in Cryptococcus neoformans var. grubii serotype A (strain H99 / ATCC 208821 / CBS 10515 / FGSC 9487) (Filobasidiella neoformans var. grubii).